The sequence spans 1113 residues: MESKAWESNNEDLLSSSGVTSNGGSSSSFFVSSIRGTIIENTSSAGTLTQVPFFPKYEVELDSPRKIIPSPGKEHFERVLEEYSHQVKDLQRRLNESNELHEKQKFYLRQSVIDLQTKLQEMQMERDAMADIRRRESQSQEDLRNQLQNTVHELEAAKCLKEDMLKDSNTQIEQLRKMMLSHEGVLQEIRSILVDFEEASGKKICEHDSMSTLHFRSLGSAISKILRELDTEISYLKGRIFPVEDQLEALKSESQNKIELLLQQHQDRIEQLISEHEVEITGLTEKASSARSQANSIQSQMEIIQEQARNQNSMYMRQLSDLESTVSQLRSELREAKRMYEDKTEELEKQLVLANSELTEARTERDQFSQESGNLDDQLQKLLADLHKREKELSLEKEQNKRLWDRDTGNSITIDHLRRELDNRNMEVQRLEALLKALKSECQGQMERQMAAIQGKNESLEKVSSLTAQLESTKEMLRKVVEELTAKKMTLESSERTISDLTTSLQEKERAIEATNAEITKLRSRVDLKLQELQHLKNEGDHLRNVQTECEALKLQMTEKDKVIEILRQQIENMTQLVGQHGRTAGAMQVEKAQLEKEINDRRMELKELKILKDKKDAKIRELEARVSDLELEKVKLVNAGSERLRAVKDIKQERDQLLNEVKTSRSELNNLSEEYEVLKRNFRNKSEEMEMTTNKLKMQLKSAQSELEQTRNTLKSMEGSDGHAMKVAMGMQKQITAKRGQIDALQSKIQFLEEAMTNANKEKHFLKEEKSKLSQELSTVATEKNKMAGELEVLRSQERRLKEKVTNMEVALDKASLQFAECQDIIQRQEQESVRLKLQHTLDIKELQGPGYTSNSSLKPRLLQPASVTRSHSNVPSSQSTASFLSHHSTKANTLKEDPTRDLKQLLQELRSVINEEPAVSLSKTEEDGRTSLGALEDRVRDCITESSLRSDMCHRSNNSLRDSTEGSKSSETLSREPVTLHAGDREDPSGCFTFTSAASPSVKNSASRSFNSSPKKSPVHSLLTSSVEGSIGSTSQYRSAKPIHSSDSVKDSQSPPIETTGKTCRKLQNRLESLQTLVEDLQLKNQAMSSMIRNQEKRIQKVKDQEKMLLK.

Over residues 1–14 the composition is skewed to polar residues; the sequence is MESKAWESNNEDLL. The tract at residues 1 to 26 is disordered; that stretch reads MESKAWESNNEDLLSSSGVTSNGGSS. A compositionally biased stretch (low complexity) spans 15-26; that stretch reads SSSGVTSNGGSS. 2 coiled-coil regions span residues 72–183 and 243–833; these read GKEH…LSHE and VEDQ…QEQE. Disordered regions lie at residues 848-902 and 955-1062; these read LQGP…DPTR and CHRS…IETT. Composition is skewed to polar residues over residues 867-894, 955-974, 994-1017, 1024-1040, and 1053-1062; these read ASVT…TKAN, CHRS…SSET, FTFT…SSPK, LLTS…SQYR, and DSQSPPIETT. Positions 1061–1113 form a coiled coil; sequence TTGKTCRKLQNRLESLQTLVEDLQLKNQAMSSMIRNQEKRIQKVKDQEKMLLK.

The polypeptide is Coiled-coil domain-containing protein 158 (CCDC158) (Homo sapiens (Human)).